The following is a 701-amino-acid chain: Polyribonucleotide nucleotidyltransferase (701 aa).

Aspartate 487 and aspartate 493 together coordinate Mg(2+). Residues 554 to 613 enclose the KH domain; the sequence is PTMIAMKIDTDKIRDVIGKGGATIRAICEETKASIDIEDDGSIKIFGETKEAADAAKQRI. The S1 motif domain maps to 623-691; the sequence is GKIYVGKVER…NRGRIKLSIK (69 aa).

The protein belongs to the polyribonucleotide nucleotidyltransferase family. In terms of assembly, component of the RNA degradosome, which is a multiprotein complex involved in RNA processing and mRNA degradation. It depends on Mg(2+) as a cofactor.

It is found in the cytoplasm. The enzyme catalyses RNA(n+1) + phosphate = RNA(n) + a ribonucleoside 5'-diphosphate. Involved in mRNA degradation. Catalyzes the phosphorolysis of single-stranded polyribonucleotides processively in the 3'- to 5'-direction. The chain is Polyribonucleotide nucleotidyltransferase from Pseudomonas putida (Arthrobacter siderocapsulatus).